Here is a 320-residue protein sequence, read N- to C-terminus: Methionyl-tRNA formyltransferase (320 aa).

Position 114–117 (114–117 (SLLP)) interacts with (6S)-5,6,7,8-tetrahydrofolate.

The protein belongs to the Fmt family.

The catalysed reaction is L-methionyl-tRNA(fMet) + (6R)-10-formyltetrahydrofolate = N-formyl-L-methionyl-tRNA(fMet) + (6S)-5,6,7,8-tetrahydrofolate + H(+). In terms of biological role, attaches a formyl group to the free amino group of methionyl-tRNA(fMet). The formyl group appears to play a dual role in the initiator identity of N-formylmethionyl-tRNA by promoting its recognition by IF2 and preventing the misappropriation of this tRNA by the elongation apparatus. In Acinetobacter baumannii (strain AB0057), this protein is Methionyl-tRNA formyltransferase.